The primary structure comprises 262 residues: Rhomboid-type serine protease 2 (262 aa).

The Cytoplasmic portion of the chain corresponds to M1–A16. A helical transmembrane segment spans residues L17–L37. The Lumenal segment spans residues R38 to S57. Residues L58 to A78 form a helical membrane-spanning segment. Residues P79–T89 lie on the Cytoplasmic side of the membrane. Residues V90 to L110 form a helical membrane-spanning segment. Over G111–K112 the chain is Lumenal. A helical membrane pass occupies residues L113–Y133. S124 acts as the Nucleophile in catalysis. Residues Y134–D151 lie on the Cytoplasmic side of the membrane. The chain crosses the membrane as a helical span at residues Y152 to A168. The Lumenal segment spans residues V169 to S174. The helical transmembrane segment at S175–Y191 threads the bilayer. H179 is a catalytic residue. Residues K192–A262 are Cytoplasmic-facing. Residues S243–A262 are disordered. Over residues N252–A262 the composition is skewed to polar residues.

This sequence belongs to the peptidase S54 family. As to quaternary structure, interacts with SNX3.

The protein resides in the golgi apparatus membrane. It localises to the golgi apparatus. The protein localises to the cis-Golgi network membrane. The catalysed reaction is Cleaves type-1 transmembrane domains using a catalytic dyad composed of serine and histidine that are contributed by different transmembrane domains.. Its function is as follows. Probable rhomboid-type serine protease that catalyzes intramembrane proteolysis. The sequence is that of Rhomboid-type serine protease 2 (RBD2) from Saccharomyces cerevisiae (strain ATCC 204508 / S288c) (Baker's yeast).